The primary structure comprises 149 residues: Large ribosomal subunit protein uL22c (149 aa).

Belongs to the universal ribosomal protein uL22 family. As to quaternary structure, part of the 50S ribosomal subunit.

It is found in the plastid. It localises to the chloroplast. This protein binds specifically to 23S rRNA. Functionally, the globular domain of the protein is located near the polypeptide exit tunnel on the outside of the subunit, while an extended beta-hairpin is found that lines the wall of the exit tunnel in the center of the 70S ribosome. This is Large ribosomal subunit protein uL22c (rpl22) from Hordeum vulgare (Barley).